The chain runs to 263 residues: Hydroxyethylthiazole kinase (263 aa).

Met39 lines the substrate pocket. The ATP site is built by Lys115 and Thr160. Gly187 contributes to the substrate binding site.

The protein belongs to the Thz kinase family. Mg(2+) is required as a cofactor.

It carries out the reaction 5-(2-hydroxyethyl)-4-methylthiazole + ATP = 4-methyl-5-(2-phosphooxyethyl)-thiazole + ADP + H(+). The protein operates within cofactor biosynthesis; thiamine diphosphate biosynthesis; 4-methyl-5-(2-phosphoethyl)-thiazole from 5-(2-hydroxyethyl)-4-methylthiazole: step 1/1. Its function is as follows. Catalyzes the phosphorylation of the hydroxyl group of 4-methyl-5-beta-hydroxyethylthiazole (THZ). This chain is Hydroxyethylthiazole kinase, found in Staphylococcus aureus (strain JH9).